A 249-amino-acid chain; its full sequence is 2,5-diamino-6-ribosylamino-4(3H)-pyrimidinone 5'-phosphate reductase (249 aa).

Residues Thr79, Asp83, Met164, and 187–191 each bind NADP(+); that span reads GGIVI.

It belongs to the HTP reductase family. Homodimer.

The catalysed reaction is 2,5-diamino-6-(1-D-ribitylamino)pyrimidin-4(3H)-one 5'-phosphate + NADP(+) = 2,5-diamino-6-(1-D-ribosylamino)pyrimidin-4(3H)-one 5'-phosphate + NADPH + H(+). It carries out the reaction 2,5-diamino-6-(1-D-ribitylamino)pyrimidin-4(3H)-one 5'-phosphate + NAD(+) = 2,5-diamino-6-(1-D-ribosylamino)pyrimidin-4(3H)-one 5'-phosphate + NADH + H(+). It functions in the pathway cofactor biosynthesis; riboflavin biosynthesis. Catalyzes an early step in riboflavin biosynthesis, the NADPH-dependent reduction of the ribose side chain of 2,5-diamino-6-ribosylamino-4(3H)-pyrimidinone 5'-phosphate, yielding 2,5-diamino-6-ribitylamino-4(3H)-pyrimidinone 5'-phosphate. This chain is 2,5-diamino-6-ribosylamino-4(3H)-pyrimidinone 5'-phosphate reductase (RIB7), found in Kluyveromyces marxianus (Yeast).